The chain runs to 70 residues: Peptide BmKn1 (70 aa).

The first 23 residues, 1 to 23 (MKSQTFFLLFLVVLLLAISQSEA), serve as a signal peptide directing secretion. A Phenylalanine amide modification is found at Phe36. Residues 40-70 (SMRDMDTMKYLYDPSLSAADLKTLQKLMENY) constitute a propeptide that is removed on maturation.

It belongs to the non-disulfide-bridged peptide (NDBP) superfamily. Short antimicrobial peptide (group 4) family. Expressed by the venom gland.

It localises to the secreted. The protein localises to the target cell membrane. Antibacterial peptide. This Olivierus martensii (Manchurian scorpion) protein is Peptide BmKn1.